Consider the following 360-residue polypeptide: tRNA N6-adenosine threonylcarbamoyltransferase (360 aa).

2 residues coordinate Fe cation: H111 and H115. Residues 134-138, D167, G180, D184, and N279 each bind substrate; that span reads LVSGG. Fe cation is bound at residue D307.

Belongs to the KAE1 / TsaD family. Fe(2+) serves as cofactor.

Its subcellular location is the cytoplasm. It catalyses the reaction L-threonylcarbamoyladenylate + adenosine(37) in tRNA = N(6)-L-threonylcarbamoyladenosine(37) in tRNA + AMP + H(+). Functionally, required for the formation of a threonylcarbamoyl group on adenosine at position 37 (t(6)A37) in tRNAs that read codons beginning with adenine. Is involved in the transfer of the threonylcarbamoyl moiety of threonylcarbamoyl-AMP (TC-AMP) to the N6 group of A37, together with TsaE and TsaB. TsaD likely plays a direct catalytic role in this reaction. The sequence is that of tRNA N6-adenosine threonylcarbamoyltransferase from Acaryochloris marina (strain MBIC 11017).